The following is a 204-amino-acid chain: N-(5'-phosphoribosyl)anthranilate isomerase (204 aa).

This sequence belongs to the TrpF family.

The enzyme catalyses N-(5-phospho-beta-D-ribosyl)anthranilate = 1-(2-carboxyphenylamino)-1-deoxy-D-ribulose 5-phosphate. The protein operates within amino-acid biosynthesis; L-tryptophan biosynthesis; L-tryptophan from chorismate: step 3/5. This chain is N-(5'-phosphoribosyl)anthranilate isomerase, found in Bacillus mycoides (strain KBAB4) (Bacillus weihenstephanensis).